Here is a 174-residue protein sequence, read N- to C-terminus: Large ribosomal subunit protein uL10 (174 aa).

The protein belongs to the universal ribosomal protein uL10 family. In terms of assembly, part of the ribosomal stalk of the 50S ribosomal subunit. The N-terminus interacts with L11 and the large rRNA to form the base of the stalk. The C-terminus forms an elongated spine to which L12 dimers bind in a sequential fashion forming a multimeric L10(L12)X complex.

Its function is as follows. Forms part of the ribosomal stalk, playing a central role in the interaction of the ribosome with GTP-bound translation factors. This Nitrosospira multiformis (strain ATCC 25196 / NCIMB 11849 / C 71) protein is Large ribosomal subunit protein uL10.